We begin with the raw amino-acid sequence, 321 residues long: MAVYTEVSDAALAEFLSAYAIGSLLSFKGIAEGVENSNFFLHTTEGAYILTLYEKRVREQDLPFFIGLMEHLSARGLACPQPVRDRAGQALGQLCGRPAAIVSFLEGVSVKAPGAEHCRELGRALAELHAAGRDFPMVRENNLSVSAWRPLFAQAEAQADSVEPGLAARTRSDLAVLEAHWPRDLPGGVIHADLFTDNVFFIGDALSGLIDFYFACTDAFAYDLAVCLNAWCFDPDGTFHRDMAAALIAGYEAVRPLEAAEVAALPILCRGAALRFMLTRLVDWLNVPPGALVKPKDPREFDRRLTFHRQARDARDYGRPH.

The protein belongs to the pseudomonas-type ThrB family.

It carries out the reaction L-homoserine + ATP = O-phospho-L-homoserine + ADP + H(+). It participates in amino-acid biosynthesis; L-threonine biosynthesis; L-threonine from L-aspartate: step 4/5. The protein is Homoserine kinase of Methylobacterium radiotolerans (strain ATCC 27329 / DSM 1819 / JCM 2831 / NBRC 15690 / NCIMB 10815 / 0-1).